Here is a 223-residue protein sequence, read N- to C-terminus: uncharacterized protein (223 aa).

4 helical membrane passes run 22-42 (LTVG…FVVV), 59-79 (GVAL…ATLI), 85-105 (IFSL…WCSM), and 164-184 (MAWA…SQAF).

This sequence belongs to the Rht family.

Its subcellular location is the cell membrane. This is an uncharacterized protein from Escherichia coli (strain K12).